A 108-amino-acid chain; its full sequence is UPF0145 protein LJ_1287 (108 aa).

This sequence belongs to the UPF0145 family.

The polypeptide is UPF0145 protein LJ_1287 (Lactobacillus johnsonii (strain CNCM I-12250 / La1 / NCC 533)).